Here is a 129-residue protein sequence, read N- to C-terminus: Histone H2A (129 aa).

Belongs to the histone H2A family. As to quaternary structure, the nucleosome is a histone octamer containing two molecules each of H2A, H2B, H3 and H4 assembled in one H3-H4 heterotetramer and two H2A-H2B heterodimers. The octamer wraps approximately 147 bp of DNA.

The protein localises to the nucleus. The protein resides in the chromosome. In terms of biological role, core component of nucleosome. Nucleosomes wrap and compact DNA into chromatin, limiting DNA accessibility to the cellular machineries which require DNA as a template. Histones thereby play a central role in transcription regulation, DNA repair, DNA replication and chromosomal stability. DNA accessibility is regulated via a complex set of post-translational modifications of histones, also called histone code, and nucleosome remodeling. In Chlamydomonas reinhardtii (Chlamydomonas smithii), this protein is Histone H2A (H2A-II).